We begin with the raw amino-acid sequence, 198 residues long: MVKCKLFFWLISWFLKVKNGEKVWKFLRSCPENCYSDPQFAFIGRSNVGKSTLINALANKKIAKTSTKPGRTQLLNFYKNESEKLFVDLPGYGYAAVSKTKKDQIDRIIAGYFQKDQPISAVFLILDARVGFTNLDYIMIEYIIKQGFKLHILANKIDKTNQSTRAILLNQCKKLKLNCLLISAKNKNNLSKLQELLE.

Residues 36–198 form the EngB-type G domain; the sequence is SDPQFAFIGR…NLSKLQELLE (163 aa). Residues 44–51, 70–74, 88–91, 155–158, and 182–184 contribute to the GTP site; these read GRSNVGKS, GRTQL, DLPG, NKID, and ISA. The Mg(2+) site is built by S51 and T72.

The protein belongs to the TRAFAC class TrmE-Era-EngA-EngB-Septin-like GTPase superfamily. EngB GTPase family. Requires Mg(2+) as cofactor.

In terms of biological role, necessary for normal cell division and for the maintenance of normal septation. The polypeptide is Probable GTP-binding protein EngB (Mesomycoplasma hyopneumoniae (strain J / ATCC 25934 / NCTC 10110) (Mycoplasma hyopneumoniae)).